The following is a 352-amino-acid chain: Phosphoribosylformylglycinamidine cyclo-ligase (352 aa).

Belongs to the AIR synthase family.

It localises to the cytoplasm. It carries out the reaction 2-formamido-N(1)-(5-O-phospho-beta-D-ribosyl)acetamidine + ATP = 5-amino-1-(5-phospho-beta-D-ribosyl)imidazole + ADP + phosphate + H(+). The protein operates within purine metabolism; IMP biosynthesis via de novo pathway; 5-amino-1-(5-phospho-D-ribosyl)imidazole from N(2)-formyl-N(1)-(5-phospho-D-ribosyl)glycinamide: step 2/2. This chain is Phosphoribosylformylglycinamidine cyclo-ligase, found in Pseudomonas putida (strain W619).